A 32-amino-acid polypeptide reads, in one-letter code: DDCIKPYGFCSLPILKNGLCCSGACVGVCADL.

3 disulfide bridges follow: Cys3/Cys21, Cys10/Cys25, and Cys20/Cys29. A 4-hydroxyproline modification is found at Pro6. Residue Leu32 is modified to Leucine amide.

This sequence belongs to the conotoxin O1 superfamily. Expressed by the venom duct.

It localises to the secreted. In terms of biological role, delta-conotoxins bind to site 6 of voltage-gated sodium channels and inhibit the inactivation process. This toxin inhibits sodium channel inactivation in neuronal membranes from amphibians and mammals (Nav1.2a/SCN1A, Nav1.3/SCN3A and Nav1.6/SCN8A) upon binding to receptor site 6. The protein is Delta-conotoxin EVIA of Conus ermineus (Agate cone).